A 329-amino-acid polypeptide reads, in one-letter code: BTB/POZ domain-containing adapter for CUL3-mediated RhoA degradation protein 1 (329 aa).

A disordered region spans residues 1 to 31 (MSAEASGPAPAAAECLESPSPSSVEPGSPSY). Residues 41–109 (KYVKLNVGGS…LRDGSVPLPE (69 aa)) enclose the BTB domain.

It belongs to the BACURD family. As to quaternary structure, homotetramer; forms a two-fold symmetric tetramer in solution. Interacts with CUL3; interaction is direct and forms a 5:5 heterodecamer. Component of the BCR(KCTD13) E3 ubiquitin ligase complex, at least composed of CUL3, KCTD13/BACURD1 and RBX1. Interacts with RHOA; with a preference for RhoA-GDP. Interacts with POLD2 and PCNA. Interacts with SPRTN.

The protein resides in the nucleus. The protein operates within protein modification; protein ubiquitination. Functionally, substrate-specific adapter of a BCR (BTB-CUL3-RBX1) E3 ubiquitin-protein ligase complex required for synaptic transmission. The BCR(KCTD13) E3 ubiquitin ligase complex mediates the ubiquitination of RHOA, leading to its degradation by the proteasome, thereby regulating the actin cytoskeleton and promoting synaptic transmission. This is BTB/POZ domain-containing adapter for CUL3-mediated RhoA degradation protein 1 (Kctd13) from Mus musculus (Mouse).